A 300-amino-acid chain; its full sequence is Phosphatidylglycerol--prolipoprotein diacylglyceryl transferase (300 aa).

Helical transmembrane passes span 17 to 37 (LAIRWYGLMYLAAFIMFLWFG), 59 to 79 (MLFYGVLGVILGGRLGYVLFY), 94 to 114 (VWEGGMAFHGGFLGVVVAMML), 129 to 149 (FIAPMVPCGLAAGRLGNFING), 204 to 224 (SQIYQFLGEGVLFFILLWLYA), 230 to 250 (MGAVSGAFLLGYGVFRFAAEF), and 265 to 285 (LSMGQWLSLPMILIGIAMLVW). Residue arginine 142 coordinates a 1,2-diacyl-sn-glycero-3-phospho-(1'-sn-glycerol).

Belongs to the Lgt family.

It is found in the cell inner membrane. It catalyses the reaction L-cysteinyl-[prolipoprotein] + a 1,2-diacyl-sn-glycero-3-phospho-(1'-sn-glycerol) = an S-1,2-diacyl-sn-glyceryl-L-cysteinyl-[prolipoprotein] + sn-glycerol 1-phosphate + H(+). The protein operates within protein modification; lipoprotein biosynthesis (diacylglyceryl transfer). Functionally, catalyzes the transfer of the diacylglyceryl group from phosphatidylglycerol to the sulfhydryl group of the N-terminal cysteine of a prolipoprotein, the first step in the formation of mature lipoproteins. The chain is Phosphatidylglycerol--prolipoprotein diacylglyceryl transferase from Ralstonia pickettii (strain 12J).